A 165-amino-acid polypeptide reads, in one-letter code: Endoribonuclease YbeY (165 aa).

H130, H134, and H140 together coordinate Zn(2+).

It belongs to the endoribonuclease YbeY family. The cofactor is Zn(2+).

The protein resides in the cytoplasm. Its function is as follows. Single strand-specific metallo-endoribonuclease involved in late-stage 70S ribosome quality control and in maturation of the 3' terminus of the 16S rRNA. The polypeptide is Endoribonuclease YbeY (Streptococcus pyogenes serotype M28 (strain MGAS6180)).